The chain runs to 148 residues: MKPRHKKLAIIASSVTALGVASVLVLNAFQSNLVFFFSPTQVANNEAPVGKSFRIGGLVEEGSVKRQADGVTVNFLVTDTAKVIPVVYTGILPDLFKEGKGVVAQGKLASDGIFRADEVLAKHDENYMPPEAAGALDQADKARKTVMQ.

Over 1–7 (MKPRHKK) the chain is Cytoplasmic. A helical; Signal-anchor for type II membrane protein transmembrane segment spans residues 8–28 (LAIIASSVTALGVASVLVLNA). The Periplasmic segment spans residues 29 to 148 (FQSNLVFFFS…ADKARKTVMQ (120 aa)). Residues His123 and Tyr127 each contribute to the heme site.

Belongs to the CcmE/CycJ family.

It localises to the cell inner membrane. Its function is as follows. Heme chaperone required for the biogenesis of c-type cytochromes. Transiently binds heme delivered by CcmC and transfers the heme to apo-cytochromes in a process facilitated by CcmF and CcmH. This chain is Cytochrome c-type biogenesis protein CcmE, found in Nitrosospira multiformis (strain ATCC 25196 / NCIMB 11849 / C 71).